The chain runs to 229 residues: UPF0758 protein Ppro_3582 (229 aa).

Positions 1–20 (MCPGIREWPEDERPREKMLR) are disordered. Residues 7–19 (EWPEDERPREKML) are compositionally biased toward basic and acidic residues. The MPN domain occupies 107 to 229 (RFTSPRQVFD…YLSFVERGVL (123 aa)). Zn(2+) is bound by residues histidine 178, histidine 180, and aspartate 191. The JAMM motif signature appears at 178–191 (HNHPTGDPTPSQED).

Belongs to the UPF0758 family.

The sequence is that of UPF0758 protein Ppro_3582 from Pelobacter propionicus (strain DSM 2379 / NBRC 103807 / OttBd1).